The chain runs to 129 residues: MAKKTNTRKRRQRKNVETGVAHIRSTFNNTIVTITDPHGNAISWASAGALGFKGSRKSTPFAAQMAAETAAKAAMEHGMKSIEVSVKGPGAGREAAIRSLQAVGLEVNMIKDVTPVPHNGCRPPKRRRV.

This sequence belongs to the universal ribosomal protein uS11 family. Part of the 30S ribosomal subunit. Interacts with proteins S7 and S18. Binds to IF-3.

In terms of biological role, located on the platform of the 30S subunit, it bridges several disparate RNA helices of the 16S rRNA. Forms part of the Shine-Dalgarno cleft in the 70S ribosome. The sequence is that of Small ribosomal subunit protein uS11 from Halalkalibacterium halodurans (strain ATCC BAA-125 / DSM 18197 / FERM 7344 / JCM 9153 / C-125) (Bacillus halodurans).